Here is a 249-residue protein sequence, read N- to C-terminus: Methylthioribulose-1-phosphate dehydratase (249 aa).

2 residues coordinate Zn(2+): H103 and H105.

It belongs to the aldolase class II family. MtnB subfamily. Zn(2+) is required as a cofactor.

The enzyme catalyses 5-(methylsulfanyl)-D-ribulose 1-phosphate = 5-methylsulfanyl-2,3-dioxopentyl phosphate + H2O. Its pathway is amino-acid biosynthesis; L-methionine biosynthesis via salvage pathway; L-methionine from S-methyl-5-thio-alpha-D-ribose 1-phosphate: step 2/6. Catalyzes the dehydration of methylthioribulose-1-phosphate (MTRu-1-P) into 2,3-diketo-5-methylthiopentyl-1-phosphate (DK-MTP-1-P). The sequence is that of Methylthioribulose-1-phosphate dehydratase from Leptospira interrogans serogroup Icterohaemorrhagiae serovar copenhageni (strain Fiocruz L1-130).